The primary structure comprises 337 residues: Dimethyladenosine transferase 1, mitochondrial (337 aa).

A mitochondrion-targeting transit peptide spans Met1–Arg84. Residues Gln38–Leu41, Asn39, Leu41, Gly67, Glu89, Asp118, and Asn140 each bind S-adenosyl-L-methionine.

This sequence belongs to the class I-like SAM-binding methyltransferase superfamily. rRNA adenine N(6)-methyltransferase family. KsgA subfamily.

The protein resides in the mitochondrion. Probable S-adenosyl-L-methionine-dependent methyltransferase which specifically dimethylates mitochondrial 12S rRNA at the conserved stem loop. The protein is Dimethyladenosine transferase 1, mitochondrial (mtTFB1) of Drosophila pseudoobscura pseudoobscura (Fruit fly).